The following is a 356-amino-acid chain: Alpha-N-acetylneuraminide alpha-2,8-sialyltransferase (356 aa).

The Cytoplasmic portion of the chain corresponds to 1–29 (MSPCGRARRQTSRGAMAVLAWKFPRTRLP). Residues 30–48 (MGASALCVVVLCWLYIFPV) traverse the membrane as a helical; Signal-anchor for type II membrane protein segment. The Lumenal segment spans residues 49-356 (YRLPNEKEIV…CEDTSLQPTS (308 aa)). Residues N71 and N119 are each glycosylated (N-linked (GlcNAc...) asparagine). 2 disulfides stabilise this stretch: C138–C287 and C152–C347. Positions 143 and 166 each coordinate CMP-N-acetyl-beta-neuraminate. N-linked (GlcNAc...) asparagine glycans are attached at residues N214 and N245. Residues S274, T275, G276, W296, and H310 each contribute to the CMP-N-acetyl-beta-neuraminate site. The Proton donor/acceptor role is filled by H322.

This sequence belongs to the glycosyltransferase 29 family. As to expression, strongly expressed in melanoma cell lines, adult and fetal brain and to a lesser extent in adult and fetal lung.

It is found in the golgi apparatus membrane. The catalysed reaction is an N-acetyl-alpha-neuraminyl-(2-&gt;3)-beta-D-galactosyl derivative + CMP-N-acetyl-beta-neuraminate = an N-acetyl-alpha-neuraminyl-(2-&gt;8)-N-acetyl-alpha-neuraminyl-(2-&gt;3)-beta-D-galactosyl derivative + CMP + H(+). The enzyme catalyses a ganglioside GM3 (d18:1(4E)) + CMP-N-acetyl-beta-neuraminate = a ganglioside GD3 (d18:1(4E)) + CMP + H(+). It catalyses the reaction a ganglioside GD3 (d18:1(4E)) + CMP-N-acetyl-beta-neuraminate = a ganglioside GT3 (d18:1(4E)) + CMP + H(+). It carries out the reaction a ganglioside GD1a (d18:1(4E)) + CMP-N-acetyl-beta-neuraminate = a ganglioside GT1a (d18:1(4E)) + CMP + H(+). The catalysed reaction is a ganglioside GT1b (d18:1(4E)) + CMP-N-acetyl-beta-neuraminate = a ganglioside GQ1b (d18:1(4E)) + CMP + H(+). The enzyme catalyses a ganglioside GM1b (d18:1(4E)) + CMP-N-acetyl-beta-neuraminate = a ganglioside GD1c (d18:1(4E)) + CMP + H(+). It catalyses the reaction a ganglioside GD3 + CMP-N-acetyl-beta-neuraminate = a ganglioside GT3 + CMP + H(+). It carries out the reaction [alpha-N-acetylneuraminyl-(2-&gt;8)](n)-alpha-N-acetylneuraminyl-(2-&gt;8)-alpha-N-acetylneuraminyl-(2-&gt;3)-beta-D-galactosyl-(1-&gt;4)-beta-D-glucosyl-(1&lt;-&gt;1)-ceramide + CMP-N-acetyl-beta-neuraminate = [alpha-N-acetylneuraminyl-(2-&gt;8)](n+1)-alpha-N-acetylneuraminyl-(2-&gt;8)-alpha-N-acetylneuraminyl-(2-&gt;3)-beta-D-galactosyl-(1-&gt;4)-beta-D-glucosyl-(1&lt;-&gt;1)-ceramide + CMP + H(+). It participates in protein modification; protein glycosylation. The protein operates within lipid metabolism; sphingolipid metabolism. Functionally, catalyzes the addition of sialic acid in alpha 2,8-linkage to the sialic acid moiety of the ganglioside GM3 to form ganglioside GD3; gangliosides are a subfamily of complex glycosphingolipds that contain one or more residues of sialic acid. Can catalyze the addition of a second alpha-2,8-sialic acid to GD3 to form GT3. Can use GM1b, GD1a and GT1b as acceptor substrates to synthesize GD1c, GT1a and GQ1b respectively. Can synthesize unusual tetra- and pentasialylated lactosylceramide derivatives identified as GQ3 (II3Neu5Ac4-Gg2Cer) and GP3 (II3Neu5Ac5-Gg2Cer) in breast cancer cells. The protein is Alpha-N-acetylneuraminide alpha-2,8-sialyltransferase of Homo sapiens (Human).